A 199-amino-acid polypeptide reads, in one-letter code: Phosphatidylethanolamine N-methyltransferase (199 aa).

The Lumenal segment spans residues 1 to 12 (MSWLLGYMDPTE). The segment at residues 13-33 (PSFVAAVITIVFNPLFWNVVA) is an intramembrane region (helical). Residues 34 to 45 (RWEQRTRKLSRA) lie on the Lumenal side of the membrane. A helical transmembrane segment spans residues 46–66 (FGSPHLACYSLGICILLLNIL). At 67-93 (RSHCFTQAMMSQPKMEGLDNHTTYFLG) the chain is on the cytoplasmic side. Residues 94–114 (LAFLGWGFVFVLSSFYALGFT) form a helical membrane-spanning segment. 98 to 100 (GWG) contacts S-adenosyl-L-methionine. Residues 115–157 (GTFLGDYFGILKESRVTTFPFSVLDNPMYWGSTANYLGWALMH) lie on the Lumenal side of the membrane. A helical membrane pass occupies residues 158–178 (ASPTGLLLTVLVAIVYVVALL). Over 179-199 (YEEPFTAEIYRQKATRLHKRS) the chain is Cytoplasmic. 180–181 (EE) contacts S-adenosyl-L-methionine.

Belongs to the class VI-like SAM-binding methyltransferase superfamily. PEMT/PEM2 methyltransferase family. As to expression, expressed in liver (at protein level).

Its subcellular location is the endoplasmic reticulum membrane. The protein resides in the mitochondrion membrane. It carries out the reaction a 1,2-diacyl-sn-glycero-3-phospho-N-methylethanolamine + S-adenosyl-L-methionine = a 1,2-diacyl-sn-glycero-3-phospho-N,N-dimethylethanolamine + S-adenosyl-L-homocysteine + H(+). The catalysed reaction is a 1,2-diacyl-sn-glycero-3-phospho-N,N-dimethylethanolamine + S-adenosyl-L-methionine = a 1,2-diacyl-sn-glycero-3-phosphocholine + S-adenosyl-L-homocysteine + H(+). It catalyses the reaction a 1,2-diacyl-sn-glycero-3-phosphoethanolamine + S-adenosyl-L-methionine = a 1,2-diacyl-sn-glycero-3-phospho-N-methylethanolamine + S-adenosyl-L-homocysteine + H(+). The enzyme catalyses 1,2-di-(9Z-octadecenoyl)-sn-glycero-3-phosphoethanolamine + S-adenosyl-L-methionine = 1,2-di-(9Z-octadecenoyl)-sn-glycero-3-phospho-N-methylethanolamine + S-adenosyl-L-homocysteine + H(+). It carries out the reaction 1,2-di-(9Z-octadecenoyl)-sn-glycero-3-phospho-N-methylethanolamine + S-adenosyl-L-methionine = 1,2-di-(9Z-octadecenoyl)-sn-glycero-3-phospho-N,N-dimethylethanolamine + S-adenosyl-L-homocysteine + H(+). The catalysed reaction is 1,2-di-(9Z-octadecenoyl)-sn-glycero-3-phospho-N,N-dimethylethanolamine + S-adenosyl-L-methionine = 1,2-di-(9Z-octadecenoyl)-sn-glycero-3-phosphocholine + S-adenosyl-L-homocysteine + H(+). It catalyses the reaction 1,2-di-(9Z,12Z-octadecadienoyl)-sn-glycero-3-phosphoethanolamine + S-adenosyl-L-methionine = 1,2-di-(9Z,12Z-octadecadienoyl)-sn-glycero-3-phospho-N-methylethanolamine + S-adenosyl-L-homocysteine + H(+). The enzyme catalyses 1,2-di-(9Z,12Z-octadecadienoyl)-sn-glycero-3-phospho-N-methylethanolamine + S-adenosyl-L-methionine = 1,2-di-(9Z,12Z-octadecadienoyl)-sn-glycero-3-phospho-N,N-dimethylethanolamine + S-adenosyl-L-homocysteine + H(+). It carries out the reaction 1,2-di-(9Z,12Z-octadecadienoyl)-sn-glycero-3-phospho-N,N-dimethylethanolamine + S-adenosyl-L-methionine = 1,2-di-(9Z,12Z-octadecadienoyl)-sn-glycero-3-phosphocholine + S-adenosyl-L-homocysteine + H(+). The catalysed reaction is 1,2-di-(9Z,12Z,15Z-octadecatrienoyl)-sn-glycero-3-phosphoethanolamine + S-adenosyl-L-methionine = 1,2-di-(9Z,12Z,15Z-octadecatrienoyl)-sn-glycero-3-phospho-N-methylethanolamine + S-adenosyl-L-homocysteine + H(+). It catalyses the reaction 1,2-di-(9Z,12Z,15Z-octadecatrienoyl)-sn-glycero-3-phospho-N-methylethanolamine + S-adenosyl-L-methionine = 1,2-di-(9Z,12Z,15Z-octadecatrienoyl)-sn-glycero-3-phospho-N,N-dimethylethanolamine + S-adenosyl-L-homocysteine + H(+). The enzyme catalyses 1,2-di-(9Z,12Z,15Z-octadecatrienoyl)-sn-glycero-3-phospho-N,N-dimethylethanolamine + S-adenosyl-L-methionine = 1,2-di-(9Z,12Z,15Z-octadecatrienoyl)-sn-glycero-3-phosphocholine + S-adenosyl-L-homocysteine + H(+). It carries out the reaction 1-hexadecanoyl-2-(4Z,7Z,10Z,13Z,16Z,19Z-docosahexaenoyl)-sn-glycero-3-phosphoethanolamine + S-adenosyl-L-methionine = 1-hexadecanoyl-2-(4Z,7Z,10Z,13Z,16Z,19Z-docosahexaenoyl)-sn-glycero-3-phospho-N-methylethanolamine + S-adenosyl-L-homocysteine + H(+). The catalysed reaction is 1-hexadecanoyl-2-(4Z,7Z,10Z,13Z,16Z,19Z-docosahexaenoyl)-sn-glycero-3-phospho-N-methylethanolamine + S-adenosyl-L-methionine = 1-hexadecanoyl-2-(4Z,7Z,10Z,13Z,16Z,19Z-docosahexaenoyl)-sn-glycero-3-phospho-N,N-dimethylethanolamine + S-adenosyl-L-homocysteine + H(+). It catalyses the reaction 1-hexadecanoyl-2-(4Z,7Z,10Z,13Z,16Z,19Z-docosahexaenoyl)-sn-glycero-3-phospho-N,N-dimethylethanolamine + S-adenosyl-L-methionine = 1-hexadecanoyl-2-(4Z,7Z,10Z,13Z,16Z,19Z-docosahexaenoyl)-sn-glycero-3-phosphocholine + S-adenosyl-L-homocysteine + H(+). Its pathway is phospholipid metabolism; phosphatidylcholine biosynthesis. Functionally, catalyzes the three sequential steps of the methylation pathway for the biosynthesis of phosphatidylcholine, a critical and essential component for membrane structure. Uses S-adenosylmethionine (S-adenosyl-L-methionine, SAM or AdoMet) as the methyl group donor for the methylation of phosphatidylethanolamine (1,2-diacyl-sn-glycero-3-phosphoethanolamine, PE) to phosphatidylmonomethylethanolamine (1,2-diacyl-sn-glycero-3-phospho-N-methylethanolamine, PMME), PMME to phosphatidyldimethylethanolamine (1,2-diacyl-sn-glycero-3-phospho-N,N-dimethylethanolamine, PDME), and PDME to phosphatidylcholine (1,2-diacyl-sn-glycero-3-phosphocholine, PC), producing S-adenosyl-L-homocysteine in each step. In Mus musculus (Mouse), this protein is Phosphatidylethanolamine N-methyltransferase.